Consider the following 391-residue polypeptide: Phosphoglycerate kinase (391 aa).

Residues 16-18, Arg-31, 54-57, Arg-108, and Arg-141 each bind substrate; these read DLN and HLGR. Residues Lys-192, Glu-314, and 340–343 each bind ATP; that span reads GGDT.

It belongs to the phosphoglycerate kinase family. As to quaternary structure, monomer.

It localises to the cytoplasm. The catalysed reaction is (2R)-3-phosphoglycerate + ATP = (2R)-3-phospho-glyceroyl phosphate + ADP. It functions in the pathway carbohydrate degradation; glycolysis; pyruvate from D-glyceraldehyde 3-phosphate: step 2/5. The sequence is that of Phosphoglycerate kinase from Coxiella burnetii (strain RSA 493 / Nine Mile phase I).